Consider the following 278-residue polypeptide: S-formylglutathione hydrolase YeiG (278 aa).

Residues S145, D223, and H256 each act as charge relay system in the active site.

It belongs to the esterase D family.

It carries out the reaction S-formylglutathione + H2O = formate + glutathione + H(+). Its function is as follows. Serine hydrolase involved in the detoxification of formaldehyde. Hydrolyzes S-formylglutathione to glutathione and formate. The sequence is that of S-formylglutathione hydrolase YeiG (yeiG) from Escherichia coli (strain UTI89 / UPEC).